Consider the following 122-residue polypeptide: Large ribosomal subunit protein uL14 (122 aa).

This sequence belongs to the universal ribosomal protein uL14 family. As to quaternary structure, part of the 50S ribosomal subunit. Forms a cluster with proteins L3 and L19. In the 70S ribosome, L14 and L19 interact and together make contacts with the 16S rRNA in bridges B5 and B8.

Binds to 23S rRNA. Forms part of two intersubunit bridges in the 70S ribosome. This chain is Large ribosomal subunit protein uL14, found in Leuconostoc citreum (strain KM20).